A 417-amino-acid chain; its full sequence is Multifunctional CCA protein (417 aa).

Residues Gly-8 and Arg-11 each coordinate ATP. Residues Gly-8 and Arg-11 each coordinate CTP. The Mg(2+) site is built by Asp-21 and Asp-23. ATP is bound by residues Arg-91, Arg-143, and Arg-146. Residues Arg-91, Arg-143, and Arg-146 each coordinate CTP. Residues 232-333 (TGVHVMMVVD…VRLFERSDAL (102 aa)) form the HD domain.

Belongs to the tRNA nucleotidyltransferase/poly(A) polymerase family. Bacterial CCA-adding enzyme type 1 subfamily. Monomer. Can also form homodimers and oligomers. Mg(2+) is required as a cofactor. The cofactor is Ni(2+).

It carries out the reaction a tRNA precursor + 2 CTP + ATP = a tRNA with a 3' CCA end + 3 diphosphate. It catalyses the reaction a tRNA with a 3' CCA end + 2 CTP + ATP = a tRNA with a 3' CCACCA end + 3 diphosphate. In terms of biological role, catalyzes the addition and repair of the essential 3'-terminal CCA sequence in tRNAs without using a nucleic acid template. Adds these three nucleotides in the order of C, C, and A to the tRNA nucleotide-73, using CTP and ATP as substrates and producing inorganic pyrophosphate. tRNA 3'-terminal CCA addition is required both for tRNA processing and repair. Also involved in tRNA surveillance by mediating tandem CCA addition to generate a CCACCA at the 3' terminus of unstable tRNAs. While stable tRNAs receive only 3'-terminal CCA, unstable tRNAs are marked with CCACCA and rapidly degraded. The sequence is that of Multifunctional CCA protein from Paraburkholderia phymatum (strain DSM 17167 / CIP 108236 / LMG 21445 / STM815) (Burkholderia phymatum).